A 725-amino-acid polypeptide reads, in one-letter code: MTDFVKCQRLKVAVKLQRFVDEEVLPGTGLEPEAFWKGFDALVHDLAPVNRELLAERERLQGQLDKWHKAHPGPITDMPAYRAFLHSIGYLQPVPEHVAATTANVDLEISEQAGPQLVVPASNARYALNAANARWGSLYDALYGTDVISTSNGAEIRAGYNPLRGAKVIAFARELLDTSAPLANGSHSDANRYRIEDGELRITLADGSQTLLQHPEKYVGFTGEPDQPQAILLKNHGLHIEIQFDPQHPVGKTDAAGIKDLLLESALSTIVDCEDSVAAVDADDKVLVYRNWLGLMKGDLTETLDKGGKAITRSLNPDRVYHAAAGGELTLRGRSLLLIRNVGHLMSNPAIVDQDDKEIPEGILDGVITSLIGLHDLTRHGNSRAGSIYIVKPKMHGAAEVAFADQLFSRIEDVLHLPRNTLKMGIMDEERRTSVNLKACINAASARVAFINTGFLDRTGDEIHSAMQAGPVLRKGEMKNTPWIKAYERNNVQVGLACGLRGRAQIGKGMWAMPDRMADMLEQKIAHPKSGATTAWVPSPTAATLHAWHYHHVDVRQVQEQLEQQSLVDVSDQWLDDLLTIPVVGKPEWTREQILEELENNTQGLLGYVVRWVEQGIGCSKVPDIHNVGLMEDRATLRISSQHMANWLLHDIAGKEDIQNVLERMAKVVDKQNAGDSHYRPMTRDFKNSAAFKAACALVFKGTEQPSGYTEPLLHESRLAFKDAH.

Acetyl-CoA contacts are provided by residues valine 118, 125–126, serine 276, and arginine 313; that span reads RY. The active-site Proton acceptor is the arginine 340. Glyoxylate is bound by residues arginine 340, glutamate 429, and 454 to 457; that span reads GFLD. Residues glutamate 429 and aspartate 457 each coordinate Mg(2+). Proline 538 is an acetyl-CoA binding site. Cysteine sulfenic acid (-SOH) is present on cysteine 619. Residue aspartate 633 is the Proton donor of the active site.

This sequence belongs to the malate synthase family. GlcB subfamily. In terms of assembly, monomer. The cofactor is Mg(2+).

It is found in the cytoplasm. The catalysed reaction is glyoxylate + acetyl-CoA + H2O = (S)-malate + CoA + H(+). Its pathway is carbohydrate metabolism; glyoxylate cycle; (S)-malate from isocitrate: step 2/2. Involved in the glycolate utilization. Catalyzes the condensation and subsequent hydrolysis of acetyl-coenzyme A (acetyl-CoA) and glyoxylate to form malate and CoA. This chain is Malate synthase G 2, found in Pseudomonas syringae pv. tomato (strain ATCC BAA-871 / DC3000).